We begin with the raw amino-acid sequence, 417 residues long: Cell division protein FtsA (417 aa).

Belongs to the FtsA/MreB family. In terms of assembly, self-interacts. Interacts with FtsZ.

The protein localises to the cell inner membrane. In terms of biological role, cell division protein that is involved in the assembly of the Z ring. May serve as a membrane anchor for the Z ring. The protein is Cell division protein FtsA of Pseudomonas aeruginosa (strain ATCC 15692 / DSM 22644 / CIP 104116 / JCM 14847 / LMG 12228 / 1C / PRS 101 / PAO1).